Consider the following 253-residue polypeptide: Ribosome maturation factor RimP (253 aa).

The segment covering Arg186–Leu199 has biased composition (basic and acidic residues). Positions Arg186–Asp253 are disordered. A compositionally biased stretch (low complexity) spans Leu201–Lys216. Basic and acidic residues predominate over residues Leu240–Asp253.

Belongs to the RimP family.

The protein localises to the cytoplasm. Its function is as follows. Required for maturation of 30S ribosomal subunits. This chain is Ribosome maturation factor RimP, found in Bradyrhizobium sp. (strain BTAi1 / ATCC BAA-1182).